The sequence spans 166 residues: Glutamyl-tRNA(Gln) amidotransferase subunit C-2, mitochondrial (166 aa).

This sequence belongs to the GatC family. As to quaternary structure, subunit of the heterotrimeric GatCAB amidotransferase (AdT) complex, composed of A, B and C subunits.

The protein resides in the mitochondrion. It catalyses the reaction L-glutamyl-tRNA(Gln) + L-glutamine + ATP + H2O = L-glutaminyl-tRNA(Gln) + L-glutamate + ADP + phosphate + H(+). Its function is as follows. Allows the formation of correctly charged Gln-tRNA(Gln) through the transamidation of misacylated Glu-tRNA(Gln) in the mitochondria. The reaction takes place in the presence of glutamine and ATP through an activated gamma-phospho-Glu-tRNA(Gln). The sequence is that of Glutamyl-tRNA(Gln) amidotransferase subunit C-2, mitochondrial from Culex quinquefasciatus (Southern house mosquito).